The chain runs to 280 residues: Putative pyruvate, phosphate dikinase regulatory protein (280 aa).

152–159 (GISRTSKT) is a binding site for ADP.

The protein belongs to the pyruvate, phosphate/water dikinase regulatory protein family. PDRP subfamily.

The enzyme catalyses N(tele)-phospho-L-histidyl/L-threonyl-[pyruvate, phosphate dikinase] + ADP = N(tele)-phospho-L-histidyl/O-phospho-L-threonyl-[pyruvate, phosphate dikinase] + AMP + H(+). It carries out the reaction N(tele)-phospho-L-histidyl/O-phospho-L-threonyl-[pyruvate, phosphate dikinase] + phosphate + H(+) = N(tele)-phospho-L-histidyl/L-threonyl-[pyruvate, phosphate dikinase] + diphosphate. In terms of biological role, bifunctional serine/threonine kinase and phosphorylase involved in the regulation of the pyruvate, phosphate dikinase (PPDK) by catalyzing its phosphorylation/dephosphorylation. This Clostridioides difficile (strain 630) (Peptoclostridium difficile) protein is Putative pyruvate, phosphate dikinase regulatory protein.